Here is a 681-residue protein sequence, read N- to C-terminus: Dipeptidyl carboxypeptidase (681 aa).

His-470 contributes to the Zn(2+) binding site. The active site involves Glu-471. Zn(2+)-binding residues include His-474 and His-477.

This sequence belongs to the peptidase M3 family. It depends on Zn(2+) as a cofactor.

Its subcellular location is the cytoplasm. The enzyme catalyses Hydrolysis of unblocked, C-terminal dipeptides from oligopeptides, with broad specificity. Does not hydrolyze bonds in which P1' is Pro, or both P1 and P1' are Gly.. With respect to regulation, stimulated by Mn(2+), Mg(2+), Co(2+) and Ca(2+), inhibited by Cu(2+), Ni(2+), Zn(2+), chymostatin and 1,10-phenanthroline. Removes dipeptides from the C-termini of N-blocked tripeptides, tetrapeptides and larger peptides. In Escherichia coli (strain K12), this protein is Dipeptidyl carboxypeptidase.